The primary structure comprises 254 residues: Probable glutathione transferase omega-2 (254 aa).

The 81-residue stretch at 25–105 (GTIRIYNMRY…YLDDIYPEPR (81 aa)) folds into the GST N-terminal domain. The Nucleophile role is filled by C35. Residues K62, V75, and 89–90 (ES) each bind glutathione. Residues 110-239 (DHYEKVQQKL…SQPTETAVEF (130 aa)) enclose the GST C-terminal domain.

The protein belongs to the GST superfamily. Omega family.

The catalysed reaction is RX + glutathione = an S-substituted glutathione + a halide anion + H(+). It catalyses the reaction L-dehydroascorbate + 2 glutathione = glutathione disulfide + L-ascorbate. The enzyme catalyses methylarsonate + 2 glutathione + H(+) = methylarsonous acid + glutathione disulfide + H2O. In terms of biological role, exhibits glutathione-dependent thiol transferase activity. Has dehydroascorbate reductase activity and may contribute to the recycling of ascorbic acid. Participates in the biotransformation of inorganic arsenic and reduces monomethylarsonic acid (MMA). The protein is Probable glutathione transferase omega-2 (gsto-2) of Caenorhabditis elegans.